We begin with the raw amino-acid sequence, 142 residues long: Maximins y/Hv type 1 (142 aa).

An N-terminal signal peptide occupies residues 1-18; the sequence is MNFKYIVAVSFLIASGYA. Positions 19–43 are excised as a propeptide; the sequence is RSEENDVQSLSQREVLEEESLREIR. Residue Phe-68 is modified to Phenylalanine amide. Residues 72 to 121 constitute a propeptide that is removed on maturation; the sequence is TAEDHEVMKRLEAVMRDLDSLDHPEEASERETRGFNQEEIANLFTKKEKR. Position 141 is an isoleucine amide (Ile-141).

Belongs to the bombinin family. As to expression, expressed by the skin glands.

It is found in the secreted. In terms of biological role, maximin-y shows antimicrobial activity against bacteria and against the fungus C.albicans. It has little hemolytic activity. Functionally, maximin-Hv shows antimicrobial activity against bacteria and against the fungus C.albicans. Shows strong hemolytic activity. This chain is Maximins y/Hv type 1, found in Bombina maxima (Giant fire-bellied toad).